Here is a 574-residue protein sequence, read N- to C-terminus: Lengsin (574 aa).

Disordered regions lie at residues 1 to 36 and 66 to 131; these read MNDE…KVTK and GNMS…IPTT. Basic and acidic residues predominate over residues 11 to 23; sequence NTRDEGNETEASR. Basic residues predominate over residues 25–36; the sequence is SKLRRTRKKVTK. The span at 91 to 131 shows a compositional bias: polar residues; sequence NQTTVIKPSPLKTSASAPCSEFNTNSNHADNTWEDTQIPTT. In terms of domain architecture, GS beta-grasp spans 148-242; the sequence is NHLQFVRFEA…VICDTFTVTG (95 aa). The region spanning 249 to 574 is the GS catalytic domain; sequence PRYIAKRQLS…ERNKFLEYFI (326 aa).

The protein belongs to the glutamine synthetase family. As to quaternary structure, dodecamer. Interacts with BFSP2 and VIM.

In terms of biological role, may act as a component of the cytoskeleton or as a chaperone for the reorganization of intermediate filament proteins during terminal differentiation in the lens. Does not seem to have enzymatic activity. This is Lengsin (LGSN) from Canis lupus familiaris (Dog).